Consider the following 136-residue polypeptide: Probable flagellum biosynthesis repressor protein FlbT 2 (136 aa).

This sequence belongs to the FlbT family.

Functionally, has a post-transcriptional repressor function in flagellum biogenesis. Associates with the 5'-UTR of fljK mRNA and promotes its degradation. The sequence is that of Probable flagellum biosynthesis repressor protein FlbT 2 from Bradyrhizobium diazoefficiens (strain JCM 10833 / BCRC 13528 / IAM 13628 / NBRC 14792 / USDA 110).